The following is a 192-amino-acid chain: MRDGEGIWGRGRTGGHAHPKEAMHTTFFILGGTMLIGVISDTHLYDRAFELPKAVFDEFSNVDLIIHCGDVTDKEILDSLKDLAKVVAVKGNMDYLNLPRKEILEINDIKIGVIHGDVVYPRGDRLKLRLLGKEMGVDVLISGHTHTPFIDDCRDILLLNPGSPTVPRCPLKSIMKLSVEDKLEAKLIPIEE.

Positions 41, 43, 70, 92, 115, 144, and 146 each coordinate a divalent metal cation.

The protein belongs to the metallophosphoesterase superfamily. YfcE family. The cofactor is a divalent metal cation.

The protein is Probable metallophosphoesterase MJ0623 of Methanocaldococcus jannaschii (strain ATCC 43067 / DSM 2661 / JAL-1 / JCM 10045 / NBRC 100440) (Methanococcus jannaschii).